Reading from the N-terminus, the 916-residue chain is Phosphoenolpyruvate carboxylase (916 aa).

Catalysis depends on residues His144 and Lys578.

It belongs to the PEPCase type 1 family. It depends on Mg(2+) as a cofactor.

It carries out the reaction oxaloacetate + phosphate = phosphoenolpyruvate + hydrogencarbonate. In terms of biological role, forms oxaloacetate, a four-carbon dicarboxylic acid source for the tricarboxylic acid cycle. In Aromatoleum aromaticum (strain DSM 19018 / LMG 30748 / EbN1) (Azoarcus sp. (strain EbN1)), this protein is Phosphoenolpyruvate carboxylase.